We begin with the raw amino-acid sequence, 1319 residues long: Probable membrane antigen 3 (1319 aa).

The protein resides in the virion tegument. The polypeptide is Probable membrane antigen 3 (3) (Equine herpesvirus 2 (strain 86/87) (EHV-2)).